A 148-amino-acid polypeptide reads, in one-letter code: Large ribosomal subunit protein bL9 (148 aa).

Belongs to the bacterial ribosomal protein bL9 family.

Binds to the 23S rRNA. The protein is Large ribosomal subunit protein bL9 of Pseudomonas putida (strain ATCC 700007 / DSM 6899 / JCM 31910 / BCRC 17059 / LMG 24140 / F1).